The following is a 356-amino-acid chain: Cyclin-dependent kinase 5 activator 1 (356 aa).

Disordered stretches follow at residues Met1 to Ser53 and Ile66 to Asn99. Low complexity-rich tracts occupy residues Ser40–Asn49 and Ser71–Ser92.

It belongs to the cyclin-dependent kinase 5 activator family. As to quaternary structure, heterodimer composed of a catalytic subunit cdk-5 and a regulatory subunit cdka-1. Interaction with cdka-1 is required for cdk-5 activation. In terms of tissue distribution, expressed in all classes of neurons in the ventral cord.

It is found in the cytoplasm. Its subcellular location is the cell projection. The protein localises to the dendrite. The protein resides in the axon. Functionally, activator of the kinase cdk-5. In several motor neurons, promotes the polarized trafficking of synaptic vesicles and dense-core vesicles. In the ventral nerve cord, regulates the synaptic localization of the glutamate receptor, glr-1. In DA motor neurons, regulates axonal transport of synaptic vesicle precursors by inhibiting dynein-mediated retrograde transport. Regulates the polarized distribution of dense-core vesicles in DB motor neurons. May regulate these processes in association with cdk-5. May also play a role in GABAergic synaptic vesicle localization in the ventral nerve cord. The chain is Cyclin-dependent kinase 5 activator 1 from Caenorhabditis elegans.